Consider the following 1093-residue polypeptide: GPI ethanolamine phosphate transferase 3, catalytic subunit (1093 aa).

Residues 4 to 24 (VSVLLFLAWVCFLFYAGIALF) form a helical membrane-spanning segment. Asn268 carries an N-linked (GlcNAc...) asparagine glycan. 9 helical membrane passes run 460–480 (AAAC…GFLF), 483–503 (LLLI…GVSV), 512–532 (VVLG…KAWV), 669–689 (LWYG…RLWL), 702–722 (VLFV…YWAL), 748–768 (VMGL…TVLV), 831–851 (SVYS…LMLL), 856–876 (VSLV…LLAA), and 945–965 (FASH…PFLC). A disordered region spans residues 971–991 (KRRQPLPGSESEARVRPEEEE). The next 2 membrane-spanning stretches (helical) occupy residues 1018 to 1038 (LKYL…ASIL) and 1052 to 1072 (FIFE…GIAL).

The protein belongs to the PIGG/PIGN/PIGO family. PIGO subfamily. As to quaternary structure, forms the ethanolamine phosphate transferase 3 complex composed by PIGO and PIGF. PIGF is required to stabilize PIGO.

It localises to the endoplasmic reticulum membrane. It functions in the pathway glycolipid biosynthesis; glycosylphosphatidylinositol-anchor biosynthesis. In terms of biological role, catalytic subunit of the ethanolamine phosphate transferase 3 complex that transfers an ethanolamine phosphate (EtNP) from a phosphatidylethanolamine (PE) to the 6-OH position of the third alpha-1,2-linked mannose of the an alpha-D-Man-(1-&gt;2)-alpha-D-Man-(1-&gt;6)-2-PEtn-alpha-D-Man-(1-&gt;4)-alpha-D-GlcN-(1-&gt;6)-(1-radyl,2-acyl-sn-glycero-3-phospho)-2-acyl-inositol (also termed H6) intermediate to generate a 6-PEtn-alpha-D-Man-(1-&gt;2)-alpha-D-Man-(1-&gt;6)-2-PEtn-alpha-D-Man-(1-&gt;4)-alpha-D-GlcN-(1-&gt;6)-(1-radyl,2-acyl-sn-glycero-3-phospho)-2-acyl-inositol (also termed H7) and participates in the tenth step of the glycosylphosphatidylinositol-anchor biosynthesis. This Mus musculus (Mouse) protein is GPI ethanolamine phosphate transferase 3, catalytic subunit.